A 160-amino-acid polypeptide reads, in one-letter code: ATP synthase subunit b (160 aa).

The helical transmembrane segment at 15–35 (LVIVIGLLFWFLRGFLGGILE) threads the bilayer.

Belongs to the ATPase B chain family. In terms of assembly, F-type ATPases have 2 components, F(1) - the catalytic core - and F(0) - the membrane proton channel. F(1) has five subunits: alpha(3), beta(3), gamma(1), delta(1), epsilon(1). F(0) has four main subunits: a(1), b(1), b'(1) and c(10-14). The alpha and beta chains form an alternating ring which encloses part of the gamma chain. F(1) is attached to F(0) by a central stalk formed by the gamma and epsilon chains, while a peripheral stalk is formed by the delta, b and b' chains.

Its subcellular location is the cellular thylakoid membrane. Its function is as follows. F(1)F(0) ATP synthase produces ATP from ADP in the presence of a proton or sodium gradient. F-type ATPases consist of two structural domains, F(1) containing the extramembraneous catalytic core and F(0) containing the membrane proton channel, linked together by a central stalk and a peripheral stalk. During catalysis, ATP synthesis in the catalytic domain of F(1) is coupled via a rotary mechanism of the central stalk subunits to proton translocation. Component of the F(0) channel, it forms part of the peripheral stalk, linking F(1) to F(0). The chain is ATP synthase subunit b from Synechococcus sp. (strain CC9605).